The primary structure comprises 105 residues: Nitrogen fixation nifHD2 region GlnB-like protein 1 (105 aa).

It belongs to the P(II) protein family.

Functionally, could be involved in the regulation of nitrogen fixation. In Methanosarcina barkeri, this protein is Nitrogen fixation nifHD2 region GlnB-like protein 1.